We begin with the raw amino-acid sequence, 138 residues long: Large ribosomal subunit protein bL19 (138 aa).

Belongs to the bacterial ribosomal protein bL19 family.

In terms of biological role, this protein is located at the 30S-50S ribosomal subunit interface and may play a role in the structure and function of the aminoacyl-tRNA binding site. This is Large ribosomal subunit protein bL19 from Rickettsia massiliae (strain Mtu5).